Here is a 191-residue protein sequence, read N- to C-terminus: Ribonuclease HII (191 aa).

The 185-residue stretch at 7–191 (ILMAGVDEVG…YSPVADLISK (185 aa)) folds into the RNase H type-2 domain. Residues aspartate 13, glutamate 14, and aspartate 103 each contribute to the a divalent metal cation site.

The protein belongs to the RNase HII family. It depends on Mn(2+) as a cofactor. Requires Mg(2+) as cofactor.

It is found in the cytoplasm. The catalysed reaction is Endonucleolytic cleavage to 5'-phosphomonoester.. In terms of biological role, endonuclease that specifically degrades the RNA of RNA-DNA hybrids. The protein is Ribonuclease HII of Legionella pneumophila (strain Corby).